The sequence spans 748 residues: Catalase-peroxidase (748 aa).

A cross-link (tryptophyl-tyrosyl-methioninium (Trp-Tyr) (with M-255)) is located at residues 96–229; the sequence is WHSAGTYRVA…LAAAHMGLIY (134 aa). The active-site Proton acceptor is the His-97. Positions 229-255 form a cross-link, tryptophyl-tyrosyl-methioninium (Tyr-Met) (with W-96); it reads YVNPEGPDGNPDPIAAAKDIRTTFGRM. His-270 lines the heme b pocket.

The protein belongs to the peroxidase family. Peroxidase/catalase subfamily. As to quaternary structure, homodimer or homotetramer. Requires heme b as cofactor. Formation of the three residue Trp-Tyr-Met cross-link is important for the catalase, but not the peroxidase activity of the enzyme.

Its subcellular location is the cytoplasm. The catalysed reaction is H2O2 + AH2 = A + 2 H2O. The enzyme catalyses 2 H2O2 = O2 + 2 H2O. Bifunctional enzyme with both catalase and broad-spectrum peroxidase activity. Plays a crucial role in oxidative stress response during infection. Acts as an antigen and elicits antibody response in P.marneffei-infected AIDS patients, healthy people working in mycological laboratory, and healthy people in an endemic area. This Talaromyces marneffei (Penicillium marneffei) protein is Catalase-peroxidase.